The chain runs to 571 residues: Putative pyruvate decarboxylase C13A11.06 (571 aa).

Pyruvate-binding residues include D29 and H118. Thiamine diphosphate-binding positions include T395 and 418-420 (GSI). D450 is a Mg(2+) binding site. Thiamine diphosphate contacts are provided by residues 451-452 (GS) and 477-482 (NDGYTI). 2 residues coordinate Mg(2+): N477 and G479. E483 contributes to the pyruvate binding site.

This sequence belongs to the TPP enzyme family. In terms of assembly, homotetramer. Requires Mg(2+) as cofactor. Thiamine diphosphate serves as cofactor.

The catalysed reaction is a 2-oxocarboxylate + H(+) = an aldehyde + CO2. It catalyses the reaction pyruvate + H(+) = acetaldehyde + CO2. This is Putative pyruvate decarboxylase C13A11.06 from Schizosaccharomyces pombe (strain 972 / ATCC 24843) (Fission yeast).